Consider the following 23-residue polypeptide: GLWQKIKNAAGDLASGIVEGIKS.

As to expression, expressed by the skin parotoid and/or rostral glands.

It is found in the secreted. Functionally, antibacterial peptide, that adopts an alpha helical conformation which can disrupt bacterial membranes. Each caerin displays a different antimicrobial specificity. This Ranoidea caerulea (Green tree frog) protein is Caerin-4.3.